Consider the following 227-residue polypeptide: Probable septum site-determining protein MinC (227 aa).

Belongs to the MinC family. In terms of assembly, interacts with MinD and FtsZ.

Cell division inhibitor that blocks the formation of polar Z ring septums. Rapidly oscillates between the poles of the cell to destabilize FtsZ filaments that have formed before they mature into polar Z rings. Prevents FtsZ polymerization. This Photorhabdus laumondii subsp. laumondii (strain DSM 15139 / CIP 105565 / TT01) (Photorhabdus luminescens subsp. laumondii) protein is Probable septum site-determining protein MinC.